Reading from the N-terminus, the 423-residue chain is Ferrochelatase, mitochondrial (423 aa).

The transit peptide at 1 to 54 (MRSLGANMAAALRAAGVLLRDPLASSSWRVCQPWRWKSGAAAAAVTTETAQHAQ) directs the protein to the mitochondrion. At lysine 57 the chain carries N6-acetyllysine. Protoporphyrin IX is bound by residues arginine 115, tyrosine 123, and serine 130. Lysine 138 is subject to N6-succinyllysine. [2Fe-2S] cluster is bound at residue cysteine 196. Residues histidine 230 and aspartate 383 contribute to the active site. 3 residues coordinate [2Fe-2S] cluster: cysteine 403, cysteine 406, and cysteine 411. Lysine 415 is subject to N6-acetyllysine; alternate. Lysine 415 carries the N6-succinyllysine; alternate modification.

Belongs to the ferrochelatase family. In terms of assembly, homodimer. Homotetramer. Interacts with PGRMC1; the interaction results in decreased FECH activity. Interacts with ABCB10 and SLC25A37; this interaction forms an oligomeric complex. Forms a complex with ABCB7 and ABCB10, where a dimeric FECH bridges ABCB7 and ABCB10 homodimers; this complex may be required for cellular iron homeostasis, mitochondrial function and heme biosynthesis. Interacts with ABCB7 and ABCB10. [2Fe-2S] cluster is required as a cofactor.

Its subcellular location is the mitochondrion inner membrane. It carries out the reaction heme b + 2 H(+) = protoporphyrin IX + Fe(2+). It functions in the pathway porphyrin-containing compound metabolism; protoheme biosynthesis; protoheme from protoporphyrin-IX: step 1/1. With respect to regulation, inhibited by nitric oxide (NO). The 2Fe-2S cluster could act as a NO sensor. Its function is as follows. Catalyzes the ferrous insertion into protoporphyrin IX and participates in the terminal step in the heme biosynthetic pathway. The sequence is that of Ferrochelatase, mitochondrial from Homo sapiens (Human).